We begin with the raw amino-acid sequence, 406 residues long: Probable endo-xylogalacturonan hydrolase A (406 aa).

The first 18 residues, 1–18 (MISLNSIFLLSLVGLSRA), serve as a signal peptide directing secretion. Positions 20-49 (PSRSETSPDRTIKPRAACTPTAGGSSSTDD) are disordered. PbH1 repeat units lie at residues 183-213 (TSNAQFTSLTMDATSNSDNLPKNTDAFDIGA), 214-235 (STYVTISSVAITNDDDCVAFKP), 237-257 (ANYVTVENVSCTGSHGISVGS), 266-289 (VQNVYARNITMINSSKAAGIKTYP), 299-320 (VKNATFEDFIVDGCDYAFQIQS), and 368-390 (TCDVTISGFEVKAPSGDAKILCG). The active-site Proton donor is the D228. N244 carries N-linked (GlcNAc...) asparagine glycosylation. Residue H251 is part of the active site. Residues N273, N278, and N301 are each glycosylated (N-linked (GlcNAc...) asparagine).

Belongs to the glycosyl hydrolase 28 family.

It localises to the secreted. Functionally, pectinolytic enzyme involved in the degradation of xylogalacturonan (xga), a galacturonan backbone heavily substituted with xylose, and which is one important component of the hairy regions of pectin. Activity requires a galacturonic acid backbone substituted with xylose. This Aspergillus oryzae (strain ATCC 42149 / RIB 40) (Yellow koji mold) protein is Probable endo-xylogalacturonan hydrolase A (xghA).